The chain runs to 545 residues: Glucose-6-phosphate isomerase (545 aa).

The active-site Proton donor is Glu353. Active-site residues include His384 and Lys510.

This sequence belongs to the GPI family.

It is found in the cytoplasm. It carries out the reaction alpha-D-glucose 6-phosphate = beta-D-fructose 6-phosphate. The protein operates within carbohydrate biosynthesis; gluconeogenesis. It functions in the pathway carbohydrate degradation; glycolysis; D-glyceraldehyde 3-phosphate and glycerone phosphate from D-glucose: step 2/4. Functionally, catalyzes the reversible isomerization of glucose-6-phosphate to fructose-6-phosphate. This chain is Glucose-6-phosphate isomerase, found in Aromatoleum aromaticum (strain DSM 19018 / LMG 30748 / EbN1) (Azoarcus sp. (strain EbN1)).